The following is a 280-amino-acid chain: Ribosomal RNA small subunit methyltransferase A (280 aa).

S-adenosyl-L-methionine contacts are provided by Asn18, Leu20, Gly45, Glu66, Asp89, and Asn110.

Belongs to the class I-like SAM-binding methyltransferase superfamily. rRNA adenine N(6)-methyltransferase family. RsmA subfamily.

It is found in the cytoplasm. It carries out the reaction adenosine(1518)/adenosine(1519) in 16S rRNA + 4 S-adenosyl-L-methionine = N(6)-dimethyladenosine(1518)/N(6)-dimethyladenosine(1519) in 16S rRNA + 4 S-adenosyl-L-homocysteine + 4 H(+). Its function is as follows. Specifically dimethylates two adjacent adenosines (A1518 and A1519) in the loop of a conserved hairpin near the 3'-end of 16S rRNA in the 30S particle. May play a critical role in biogenesis of 30S subunits. This is Ribosomal RNA small subunit methyltransferase A from Cupriavidus necator (strain ATCC 17699 / DSM 428 / KCTC 22496 / NCIMB 10442 / H16 / Stanier 337) (Ralstonia eutropha).